The following is a 470-amino-acid chain: Ribulose bisphosphate carboxylase large chain (470 aa).

Substrate contacts are provided by Asn-115 and Thr-165. The active-site Proton acceptor is Lys-167. Lys-169 contacts substrate. Positions 193, 195, and 196 each coordinate Mg(2+). The residue at position 193 (Lys-193) is an N6-carboxylysine. His-286 functions as the Proton acceptor in the catalytic mechanism. The substrate site is built by Arg-287, His-319, and Ser-371.

The protein belongs to the RuBisCO large chain family. Type I subfamily. Heterohexadecamer of 8 large chains and 8 small chains. Mg(2+) serves as cofactor.

It localises to the carboxysome. It carries out the reaction 2 (2R)-3-phosphoglycerate + 2 H(+) = D-ribulose 1,5-bisphosphate + CO2 + H2O. The enzyme catalyses D-ribulose 1,5-bisphosphate + O2 = 2-phosphoglycolate + (2R)-3-phosphoglycerate + 2 H(+). Functionally, ruBisCO catalyzes two reactions: the carboxylation of D-ribulose 1,5-bisphosphate, the primary event in carbon dioxide fixation, as well as the oxidative fragmentation of the pentose substrate in the photorespiration process. Both reactions occur simultaneously and in competition at the same active site. The sequence is that of Ribulose bisphosphate carboxylase large chain from Synechococcus sp. (strain CC9902).